The sequence spans 260 residues: Putative cysteine-rich repeat secretory protein 23 (260 aa).

The first 31 residues, 1 to 31, serve as a signal peptide directing secretion; the sequence is MSSSFVYKSLFLVPILAVVAMQLSFVQSVLS. Gnk2-homologous domains are found at residues 38 to 136 and 142 to 254; these read YLHH…NISY and LPEQ…LYLF.

The protein belongs to the cysteine-rich repeat secretory protein family.

It localises to the secreted. This chain is Putative cysteine-rich repeat secretory protein 23 (CRRSP23), found in Arabidopsis thaliana (Mouse-ear cress).